The primary structure comprises 265 residues: MKAVVLTLAVLFLTGSQARHFWQQDDPQSPWDRVKDFATVYVDAIKDSGRDYVAQFEASALGKHLNLKLLDNWDSLGSTFTKVREQLGPVTQEFWDNLEKETEALRQEMSKDLEEVKKKVQPYLDDFQNKWQEEMETYRQKMAPLGAEFREGARQKVQELQEKLSPLAEELRDRLRAHVEALRQHVAPYSDDLRQRMAARFEALKEGGGSLAEYQAKAQEQLKALGEKAKPALEDLRQGLLPVLENLKVSILAAIDEASKKLNAQ.

Residues 1-18 form the signal peptide; the sequence is MKAVVLTLAVLFLTGSQA. Repeat copies occupy residues 67-88 and 89-110. The 10 X approximate tandem repeats stretch occupies residues 67-265; it reads LKLLDNWDSL…DEASKKLNAQ (199 aa). Met-109 is subject to Methionine sulfoxide. One copy of the 3; half-length repeat lies at 111 to 121; the sequence is KDLEEVKKKVQ. Tandem repeats lie at residues 122 to 142, 144 to 165, 166 to 187, 188 to 209, and 210 to 230. Residue Met-135 is modified to Methionine sulfoxide. A 9; half-length repeat occupies 231 to 241; it reads PALEDLRQGLL. Copy 10 of the repeat occupies 242 to 265; it reads PVLENLKVSILAAIDEASKKLNAQ.

The protein belongs to the apolipoprotein A1/A4/E family. As to quaternary structure, homodimer. Interacts with APOA1BP and CLU. Component of a sperm activating protein complex (SPAP), consisting of APOA1, an immunoglobulin heavy chain, an immunoglobulin light chain and albumin. Interacts with NDRG1. Interacts with SCGB3A2. Interacts with NAXE and YJEFN3. In terms of processing, glycosylated. Palmitoylated. Post-translationally, phosphorylation sites are present in the extracellular medium. In terms of tissue distribution, major protein of plasma HDL, also found in chylomicrons. Synthesized predominantly in the intestine and the liver.

The protein localises to the secreted. In terms of biological role, participates in the reverse transport of cholesterol from tissues to the liver for excretion by promoting cholesterol efflux from tissues and by acting as a cofactor for the lecithin cholesterol acyltransferase (LCAT). As part of the SPAP complex, activates spermatozoa motility. This is Apolipoprotein A-I (APOA1) from Sus scrofa (Pig).